We begin with the raw amino-acid sequence, 417 residues long: Serine hydroxymethyltransferase 2 (417 aa).

Residues Leu121 and 125–127 (GHL) each bind (6S)-5,6,7,8-tetrahydrofolate. N6-(pyridoxal phosphate)lysine is present on Lys230. 355-357 (SPF) lines the (6S)-5,6,7,8-tetrahydrofolate pocket.

Belongs to the SHMT family. In terms of assembly, homodimer. Pyridoxal 5'-phosphate serves as cofactor.

It localises to the cytoplasm. It carries out the reaction (6R)-5,10-methylene-5,6,7,8-tetrahydrofolate + glycine + H2O = (6S)-5,6,7,8-tetrahydrofolate + L-serine. Its pathway is one-carbon metabolism; tetrahydrofolate interconversion. It functions in the pathway amino-acid biosynthesis; glycine biosynthesis; glycine from L-serine: step 1/1. Functionally, catalyzes the reversible interconversion of serine and glycine with tetrahydrofolate (THF) serving as the one-carbon carrier. This reaction serves as the major source of one-carbon groups required for the biosynthesis of purines, thymidylate, methionine, and other important biomolecules. Also exhibits THF-independent aldolase activity toward beta-hydroxyamino acids, producing glycine and aldehydes, via a retro-aldol mechanism. This chain is Serine hydroxymethyltransferase 2, found in Colwellia psychrerythraea (strain 34H / ATCC BAA-681) (Vibrio psychroerythus).